A 725-amino-acid chain; its full sequence is MTDQGVAKEQYITVGSLKEIADPVKKFLRKGNRKGRNQKELKFRAKVVNQQLADETGSINFTTEGVAVNNNQTYEFTGSLKVVDYKLNLAVTSATPAKDQIANLGSEQLSKADIDQHSGKHIVLIKDLINLRIGQSFFARPKDIVHNNEQRRMTATLADNTAAIQAEISVNKKSITQEVLESLNSDKVYLFSDVVLNFNESNKLVARFNYRSNIVEANDRQIQQLSNNNLSAKEYSDETEKKALTDVLQIHEKKERVHKQQNKNKNPRNAHKNHNRQRPNLQETEPVKISGLQQWNNNQTVIGKIVSLRTEDKSLPAKQDGTSTTMVYLKGTIGDETGVIDFDMAEKRDCPRFKENDVVKFTSVMNKGRQSAEGKVGGHYIEVKKFGQYIILSDHNINNVNLNNNLSNLELTARPKNPNPRFIKGEFVGVKEEEKDGNIQYTYTVRSKEGEEQSITIRNKITTLKVGEIHKIDRERKRSSSRPNHQGGQRGNRSHSQNNRNQRNRDKHHNSQNNQPNKYKNTSVQNNNNNKNQQRSQSQNQRPPRNYDNRQGGENRNNRQRNENNRNNFNGNGHRVNNQNNQRNRNSSYPRNNNYDHHHNQQTDISGLEPGKRGQNVTGQVIEVSEFSKQINDKTLHFVKGRIADENANIRFDIKKPQNLEIKVGEVYNFKDVNNKVDDNGYHYIDLNRFGRVFPSHKKFQSINDKRNCDADRSSIEYVKKTVPN.

The Nuclear localization signal signature appears at 241–258 (KKALTDVLQIHEKKERVH). Disordered stretches follow at residues 252 to 284 (EKKERVHKQQNKNKNPRNAHKNHNRQRPNLQET) and 468 to 614 (EIHK…GKRG). The span at 256-277 (RVHKQQNKNKNPRNAHKNHNRQ) shows a compositional bias: basic residues. A compositionally biased stretch (basic and acidic residues) spans 468–478 (EIHKIDRERKR). Low complexity predominate over residues 517-544 (NKYKNTSVQNNNNNKNQQRSQSQNQRPP). Residues 545–564 (RNYDNRQGGENRNNRQRNEN) show a composition bias toward basic and acidic residues. Residues 565–593 (NRNNFNGNGHRVNNQNNQRNRNSSYPRNN) are compositionally biased toward low complexity.

In terms of processing, the N-terminus is blocked.

Its subcellular location is the nucleus. Functionally, binds specifically to parallel G4-DNA, a four-stranded structure stabilized by tetrads of hydrogen-bonded guanines. This is G-quartet DNA-binding protein TGP1 (TGP1) from Tetrahymena thermophila.